The primary structure comprises 335 residues: N-acetylglucosaminyl-phosphatidylinositol de-N-acetylase (335 aa).

A helical membrane pass occupies residues 3-23; that stretch reads SAFTFLSLAIFPLALFIFWTL. Asn128 and Asn153 each carry an N-linked (GlcNAc...) asparagine glycan.

The protein belongs to the PIGL family.

The protein localises to the endoplasmic reticulum membrane. It carries out the reaction a 6-(N-acetyl-alpha-D-glucosaminyl)-1-(1,2-diacyl-sn-glycero-3-phospho)-1D-myo-inositol + H2O = a 6-(alpha-D-glucosaminyl)-1-(1,2-diacyl-sn-glycero-3-phospho)-1D-myo-inositol + acetate. Its pathway is glycolipid biosynthesis; glycosylphosphatidylinositol-anchor biosynthesis. In terms of biological role, involved in the second step of GPI biosynthesis. De-N-acetylation of N-acetylglucosaminyl-phosphatidylinositol. This Arthroderma benhamiae (strain ATCC MYA-4681 / CBS 112371) (Trichophyton mentagrophytes) protein is N-acetylglucosaminyl-phosphatidylinositol de-N-acetylase.